The sequence spans 101 residues: Interleukin-8 (101 aa).

Positions 1–22 are cleaved as a signal peptide; it reads MPSQLRVAVLAAFLLSAVLCEG. Disulfide bonds link Cys34-Cys61 and Cys36-Cys77.

The protein belongs to the intercrine alpha (chemokine CxC) family. In terms of assembly, homodimer. Interacts with TNFAIP6 (via Link domain); this interaction interferes with chemokine binding to glycosaminoglycans.

The protein resides in the secreted. In terms of biological role, chemotactic factor that mediates inflammatory response by attracting neutrophils, basophils, and T-cells to clear pathogens and protect the host from infection. Also plays an important role in neutrophil activation. Released in response to an inflammatory stimulus, exerts its effect by binding to the G-protein-coupled receptors CXCR1 and CXCR2, primarily found in neutrophils, monocytes and endothelial cells. G-protein heterotrimer (alpha, beta, gamma subunits) constitutively binds to CXCR1/CXCR2 receptor and activation by IL8 leads to beta and gamma subunits release from Galpha (GNAI2 in neutrophils) and activation of several downstream signaling pathways including PI3K and MAPK pathways. This Cavia porcellus (Guinea pig) protein is Interleukin-8 (CXCL8).